Reading from the N-terminus, the 1275-residue chain is Probable Rho-type GTPase-activating protein 2 (1275 aa).

Disordered regions lie at residues 118-146 (KYESTDSFPSSQPSRANSPQSDSYSSPYE), 213-238 (NTKRSHRSSEEPGASSPVTSPILKDS), 280-306 (SSFRRPITKPTPFNSDSNISIDPKDNN), and 335-365 (SSPRRKSISIVKPHGISSPKHSTNNLSSKSG). Polar residues predominate over residues 122–143 (TDSFPSSQPSRANSPQSDSYSS). Composition is skewed to polar residues over residues 290–299 (TPFNSDSNIS) and 353–364 (PKHSTNNLSSKS). Ser388 carries the phosphoserine modification. Disordered stretches follow at residues 390–466 (IIEN…RSSF) and 539–561 (FSKSKSHNHHPSSQVEKSTSNSK). Polar residues-rich tracts occupy residues 450–466 (SLSLQKTGSSDTRRSSF) and 552–561 (QVEKSTSNSK). Positions 719–836 (HAQKEGVLLK…WLRAILRQVP (118 aa)) constitute a PH domain. The segment covering 957–971 (ADTRRNQDAPEKHVP) has biased composition (basic and acidic residues). 2 disordered regions span residues 957 to 988 (ADTRRNQDAPEKHVPVIEIQSSRPSLEKTDQS) and 1254 to 1275 (NGAQNESDSDVSDDNGEDNEFF). Residues 1065–1275 (LPLNEAVNIS…DDNGEDNEFF (211 aa)) form the Rho-GAP domain. Acidic residues predominate over residues 1260 to 1275 (SDSDVSDDNGEDNEFF).

It localises to the nucleus. GTPase-activating protein for Rho-type proteins. This Schizosaccharomyces pombe (strain 972 / ATCC 24843) (Fission yeast) protein is Probable Rho-type GTPase-activating protein 2 (rga2).